We begin with the raw amino-acid sequence, 198 residues long: ATP-dependent Clp protease proteolytic subunit (198 aa).

Catalysis depends on Ser98, which acts as the Nucleophile. The active site involves His123.

It belongs to the peptidase S14 family. As to quaternary structure, fourteen ClpP subunits assemble into 2 heptameric rings which stack back to back to give a disk-like structure with a central cavity, resembling the structure of eukaryotic proteasomes.

Its subcellular location is the cytoplasm. It carries out the reaction Hydrolysis of proteins to small peptides in the presence of ATP and magnesium. alpha-casein is the usual test substrate. In the absence of ATP, only oligopeptides shorter than five residues are hydrolyzed (such as succinyl-Leu-Tyr-|-NHMec, and Leu-Tyr-Leu-|-Tyr-Trp, in which cleavage of the -Tyr-|-Leu- and -Tyr-|-Trp bonds also occurs).. Functionally, cleaves peptides in various proteins in a process that requires ATP hydrolysis. Has a chymotrypsin-like activity. Plays a major role in the degradation of misfolded proteins. This Bacillus pumilus (strain SAFR-032) protein is ATP-dependent Clp protease proteolytic subunit.